We begin with the raw amino-acid sequence, 145 residues long: Maximins 5/H4 type 2 (145 aa).

The N-terminal stretch at 1–18 (MNFKYIVAVSFLIASAYA) is a signal peptide. 2 propeptides span residues 19 to 43 (RSVQ…REIR) and 74 to 124 (TAEE…KEKR). Leu-144 carries the post-translational modification Leucine amide.

The protein belongs to the bombinin family. Expressed by the skin glands.

It is found in the secreted. In terms of biological role, maximin-5 shows antibacterial activity against both Gram-positive and Gram-negative bacteria. The only exception is the resistance of E.coli. Also shows antimicrobial activity against fungi C.albicans, A.flavus and P.uticale. It has little hemolytic activity. It does not possess a significant cytotoxicity against tumor cell lines. It does not possess a significant anti-HIV activity. Its function is as follows. Maximin-H4 shows antibacterial activity against both Gram-positive and Gram-negative bacteria. It also shows antimicrobial activity against the fungus C.albicans. Shows strong hemolytic activity. The polypeptide is Maximins 5/H4 type 2 (Bombina maxima (Giant fire-bellied toad)).